Consider the following 84-residue polypeptide: Neurotoxin BmK-M11 (84 aa).

The first 19 residues, 1–19 (MNYLVMISFALLLMTGVES), serve as a signal peptide directing secretion. The region spanning 21 to 83 (RDAYIAKPEN…VPIRVPGKCH (63 aa)) is the LCN-type CS-alpha/beta domain. Cystine bridges form between cysteine 31/cysteine 82, cysteine 35/cysteine 55, cysteine 41/cysteine 65, and cysteine 45/cysteine 67. Arginine 84 is a propeptide (removed by a carboxypeptidase).

This sequence belongs to the long (4 C-C) scorpion toxin superfamily. Sodium channel inhibitor family. Alpha subfamily. As to expression, expressed by the venom gland.

The protein resides in the secreted. Functionally, alpha toxins bind voltage-independently at site-3 of sodium channels (Nav) and inhibit the inactivation of the activated channels, thereby blocking neuronal transmission. This recombinant toxin selectively inhibits the fast inactivation of mNav1.4/SCN4A (EC(50)=82.3 nM) (tested in HEK293 cells). In Olivierus martensii (Manchurian scorpion), this protein is Neurotoxin BmK-M11.